A 357-amino-acid chain; its full sequence is 3-isopropylmalate dehydrogenase (357 aa).

Position 76–89 (76–89 (GPKWDALDSNIRPE)) interacts with NAD(+). The substrate site is built by R96, R106, R134, and D224. Mg(2+) contacts are provided by D224, D248, and D252. 282–294 (GSAPDIAGQGVAN) serves as a coordination point for NAD(+).

The protein belongs to the isocitrate and isopropylmalate dehydrogenases family. LeuB type 1 subfamily. In terms of assembly, homodimer. Mg(2+) serves as cofactor. Requires Mn(2+) as cofactor.

Its subcellular location is the cytoplasm. It catalyses the reaction (2R,3S)-3-isopropylmalate + NAD(+) = 4-methyl-2-oxopentanoate + CO2 + NADH. It participates in amino-acid biosynthesis; L-leucine biosynthesis; L-leucine from 3-methyl-2-oxobutanoate: step 3/4. Its function is as follows. Catalyzes the oxidation of 3-carboxy-2-hydroxy-4-methylpentanoate (3-isopropylmalate) to 3-carboxy-4-methyl-2-oxopentanoate. The product decarboxylates to 4-methyl-2 oxopentanoate. This is 3-isopropylmalate dehydrogenase from Saccharophagus degradans (strain 2-40 / ATCC 43961 / DSM 17024).